Reading from the N-terminus, the 103-residue chain is Large ribosomal subunit protein uL24 (103 aa).

The protein belongs to the universal ribosomal protein uL24 family. Part of the 50S ribosomal subunit.

Functionally, one of two assembly initiator proteins, it binds directly to the 5'-end of the 23S rRNA, where it nucleates assembly of the 50S subunit. One of the proteins that surrounds the polypeptide exit tunnel on the outside of the subunit. The polypeptide is Large ribosomal subunit protein uL24 (rplX) (Bacillus spizizenii (strain ATCC 23059 / NRRL B-14472 / W23) (Bacillus subtilis subsp. spizizenii)).